The following is a 418-amino-acid chain: Magnesium-chelatase subunit ChlI-2, chloroplastic (418 aa).

The N-terminal 55 residues, methionine 1–serine 55, are a transit peptide targeting the chloroplast. Valine 56 is modified (N-acetylvaline). Disulfide bonds link cysteine 96/cysteine 187 and cysteine 348/cysteine 390. Glycine 113–serine 120 is a binding site for ATP.

The protein belongs to the Mg-chelatase subunits D/I family. In terms of assembly, the magnesium chelatase complex is a heterotrimer consisting of subunits CHLI, CHLD and CHLH. Expressed in leaves.

It localises to the plastid. The protein resides in the chloroplast. The catalysed reaction is protoporphyrin IX + Mg(2+) + ATP + H2O = Mg-protoporphyrin IX + ADP + phosphate + 3 H(+). It participates in porphyrin-containing compound metabolism; chlorophyll biosynthesis. With respect to regulation, redox regulation; active in reducing conditions, inactive in oxidizing conditions. Thioredoxins f and m mediate the reversible reductive activation of oxidized CHLI2. In terms of biological role, involved in chlorophyll biosynthesis. Catalyzes the insertion of magnesium ion into protoporphyrin IX to yield Mg-protoporphyrin IX. The reaction takes place in two steps, with an ATP-dependent activation followed by an ATP-dependent chelation step. Possesses low affinity for ATP and may play a limited role in chlorophyll biosynthesis, and contributes to the assembly of the Mg-chelatase complex. The chain is Magnesium-chelatase subunit ChlI-2, chloroplastic (CHLI2) from Arabidopsis thaliana (Mouse-ear cress).